The chain runs to 838 residues: Alpha-glucan phosphorylase, H isozyme (838 aa).

The tract at residues 1 to 21 (MEGGAKSNDVSAAPIAQPLSE) is disordered. Position 684 is an N6-(pyridoxal phosphate)lysine (Lys684).

This sequence belongs to the glycogen phosphorylase family. It depends on pyridoxal 5'-phosphate as a cofactor.

The protein resides in the cytoplasm. The catalysed reaction is [(1-&gt;4)-alpha-D-glucosyl](n) + phosphate = [(1-&gt;4)-alpha-D-glucosyl](n-1) + alpha-D-glucose 1-phosphate. Functionally, phosphorylase is an important allosteric enzyme in carbohydrate metabolism. Enzymes from different sources differ in their regulatory mechanisms and in their natural substrates. However, all known phosphorylases share catalytic and structural properties. This chain is Alpha-glucan phosphorylase, H isozyme, found in Solanum tuberosum (Potato).